The primary structure comprises 545 residues: Aclacinomycin-N/aclacinomycin-A oxidase (545 aa).

Positions 1–43 form a signal peptide, tat-type signal; sequence MFVLNEFTRRGFLGTAAAVGGTTVVTTALGGAPAAQAAVPEAA. The FAD-binding PCMH-type domain occupies 76 to 256; it reads FRGRPDVVYV…TRYWFRTPGA (181 aa). A cross-link (6-(S-cysteinyl)-8alpha-(pros-histidyl)-FAD (His-Cys)) is located at residues 113 to 173; the sequence is HCFEGFVDDP…WGVTIPAGVC (61 aa). Y421 functions as the Proton acceptor in the catalytic mechanism. An aclacinomycin Y-binding site is contributed by T451. Residue N492 participates in FAD binding. Y493 serves as the catalytic Proton acceptor. Y493 contributes to the aclacinomycin Y binding site.

This sequence belongs to the oxygen-dependent FAD-linked oxidoreductase family. In terms of assembly, homotetramer; dimer of dimers. The cofactor is FAD. In terms of processing, predicted to be exported by the Tat system. The position of the signal peptide cleavage has been experimentally proven. The FAD cofactor is bound via a bicovalent 6-S-cysteinyl, 8alpha-N1-histidyl FAD linkage.

The catalysed reaction is aclacinomycin N + O2 = aclacinomycin A + H2O2. The enzyme catalyses aclacinomycin A + O2 = aclacinomycin Y + H2O2. With respect to regulation, inhibited by ascorbic acid and iron ion. Functionally, involved in the modification of the terminal sugar residues in the last two steps in the biosynthesis of polyketide antibiotics of the aclacinomycin group. In the first reaction, it catalyzes the oxidation of the hydroxyl group at carbon C4 of the L-rhodinose terminal sugar moiety of aclacinomycin N (AclN) to a keto group, modifying the sugar to cinerulose A and generating aclacinomycin A (AclA). In the second reaction, it catalyzes the elimination of two hydrogen atoms from cinerulose A, leading to a double bond between carbon atoms C2 and C3 and the generation of the L-aculose terminal sugar moiety of aclacinomycin Y (AclY). It can also use aclacinomycin analogs, epsilon-pyrromycinone glycosides, rhodirubins (A, B, C and E) and all triglycosides containing L-cinerulose, L-rhodinose or 2-deoxy-L-fucose as terminal sugar. The polypeptide is Aclacinomycin-N/aclacinomycin-A oxidase (Streptomyces galilaeus).